A 215-amino-acid chain; its full sequence is Large ribosomal subunit protein uL16m (215 aa).

Residues 1-36 constitute a mitochondrion transit peptide; it reads MALQQYNKFPFFFSGILGPTRLNGLQMPPIQTMVRW.

It belongs to the universal ribosomal protein uL16 family. As to quaternary structure, component of the mitochondrial large ribosomal subunit (mt-LSU). Mature yeast 74S mitochondrial ribosomes consist of a small (37S) and a large (54S) subunit. The 37S small subunit contains a 15S ribosomal RNA (15S mt-rRNA) and at least 32 different proteins. The 54S large subunit contains a 21S rRNA (21S mt-rRNA) and at least 45 different proteins.

It localises to the mitochondrion. In terms of biological role, component of the mitochondrial ribosome (mitoribosome), a dedicated translation machinery responsible for the synthesis of mitochondrial genome-encoded proteins, including at least some of the essential transmembrane subunits of the mitochondrial respiratory chain. The mitoribosomes are attached to the mitochondrial inner membrane and translation products are cotranslationally integrated into the membrane. This chain is Large ribosomal subunit protein uL16m (mrpl16), found in Schizosaccharomyces pombe (strain 972 / ATCC 24843) (Fission yeast).